The sequence spans 415 residues: Multidrug resistance protein MdtA (415 aa).

Residues 1–21 (MKGSYKSRWVIVIVVVIAAIA) form the signal peptide. 2 disordered regions span residues 32-56 (SRSA…GMRA) and 392-415 (EAQS…GARS). Positions 399-415 (SEEKATSREYAKKGARS) are enriched in basic and acidic residues.

Belongs to the membrane fusion protein (MFP) (TC 8.A.1) family. In terms of assembly, part of a tripartite efflux system composed of MdtA, MdtB and MdtC.

The protein localises to the cell inner membrane. Its function is as follows. The MdtABC tripartite complex confers resistance against novobiocin and deoxycholate. The chain is Multidrug resistance protein MdtA from Escherichia coli O7:K1 (strain IAI39 / ExPEC).